A 449-amino-acid chain; its full sequence is Intestinal acid phosphatase (449 aa).

The first 19 residues, 1 to 19, serve as a signal peptide directing secretion; that stretch reads MVSAISIVAIFALEGFVTT. At 20 to 428 the chain is on the extracellular side; sequence YSDGTKDLVF…TDLNKSSSFA (409 aa). The active-site Nucleophile is the H36. The active-site Proton donor is the D321. A helical transmembrane segment spans residues 429 to 449; sequence TVSMLFIAAILAINNNFLGLF.

Belongs to the histidine acid phosphatase family. In terms of assembly, homodimer. In terms of processing, the N-terminus is blocked. As to expression, expressed in the intestine, specifically on the edge of the gut lumen, in the 14 posterior cells of the intestine.

It localises to the membrane. It catalyses the reaction a phosphate monoester + H2O = an alcohol + phosphate. Its function is as follows. Acid phosphatase required for normal growth and development. Specifically required for normal gut differentiation. The protein is Intestinal acid phosphatase of Caenorhabditis elegans.